A 288-amino-acid chain; its full sequence is ATP synthase gamma chain (288 aa).

It belongs to the ATPase gamma chain family. F-type ATPases have 2 components, CF(1) - the catalytic core - and CF(0) - the membrane proton channel. CF(1) has five subunits: alpha(3), beta(3), gamma(1), delta(1), epsilon(1). CF(0) has three main subunits: a, b and c.

It is found in the cell inner membrane. Functionally, produces ATP from ADP in the presence of a proton gradient across the membrane. The gamma chain is believed to be important in regulating ATPase activity and the flow of protons through the CF(0) complex. The chain is ATP synthase gamma chain from Rickettsia akari (strain Hartford).